Reading from the N-terminus, the 364-residue chain is Glutamine synthetase (364 aa).

Positions 15–94 (VLAEYIWIDA…VLAECWNNDG (80 aa)) constitute a GS beta-grasp domain. The region spanning 101 to 364 (HRHECAKLMS…ETKRGEEEGF (264 aa)) is the GS catalytic domain.

It belongs to the glutamine synthetase family. As to quaternary structure, homooctamer.

It is found in the cytoplasm. It carries out the reaction L-glutamate + NH4(+) + ATP = L-glutamine + ADP + phosphate + H(+). The chain is Glutamine synthetase (GLN1) from Yarrowia lipolytica (strain CLIB 122 / E 150) (Yeast).